The sequence spans 208 residues: WEB family protein At2g17940 (208 aa).

Residues 78–113 (RTLQLNTSLSNRIKTLTQELELGKKEIQRLSRTRSS) are a coiled coil.

This sequence belongs to the WEB family.

The polypeptide is WEB family protein At2g17940 (Arabidopsis thaliana (Mouse-ear cress)).